The sequence spans 268 residues: LOB domain-containing protein 22 (268 aa).

Residues 1–31 form a disordered region; that stretch reads MPSGKPSSVFPLHPKPTPLKPSSSTSSSNNN. The segment covering 22–31 has biased composition (low complexity); that stretch reads SSSTSSSNNN. Residues 35–136 form the LOB domain; that stretch reads QACAACKYQR…NELEIVLQQL (102 aa).

This sequence belongs to the LOB domain-containing protein family.

The sequence is that of LOB domain-containing protein 22 (LBD22) from Arabidopsis thaliana (Mouse-ear cress).